The sequence spans 1531 residues: Nuclear factor of activated T-cells 5 (1531 aa).

Disordered stretches follow at residues 34-89 (ELQL…TSSS) and 114-141 (VSNR…RHTV). Residues 41–51 (RETSVASMSQT) show a composition bias toward polar residues. Positions 63-89 (VVAADASSAPSSSSMGGACSSFTTSSS) are enriched in low complexity. S120 carries the phosphoserine modification. Residue K122 is modified to N6-acetyllysine. Polar residues predominate over residues 122-134 (KQLTSNTVQQHPS). Position 134 is a phosphoserine (S134). The residue at position 135 (T135) is a Phosphothreonine; by CDK5. At S155 the chain carries Phosphoserine. Disordered stretches follow at residues 175–220 (WMED…CEES) and 241–265 (TTDN…GVKK). Low complexity predominate over residues 179–192 (SPSNFSNMSTSSYN). The span at 200–212 (KSRKRNPKQRPGV) shows a compositional bias: basic residues. The span at 241–260 (TTDNKGNSKAGNGTLENQKG) shows a compositional bias: polar residues. Residues 264-443 (KKSPMLCGQY…SPILCTQPAG (180 aa)) enclose the RHD domain. The DNA-binding element occupies 293 to 300 (RARYLTEG). Residue K556 forms a Glycyl lysine isopeptide (Lys-Gly) (interchain with G-Cter in SUMO1); alternate linkage. K556 is covalently cross-linked (Glycyl lysine isopeptide (Lys-Gly) (interchain with G-Cter in SUMO2); alternate). Phosphoserine is present on S561. Residues K573 and K603 each participate in a glycyl lysine isopeptide (Lys-Gly) (interchain with G-Cter in SUMO2) cross-link. Disordered stretches follow at residues 640-666 (NIAG…QQIQ), 841-891 (VSPG…QVME), 958-996 (PPAV…TGTQ), 1211-1304 (PQVA…QEQQ), 1316-1371 (APMN…QEQQ), and 1473-1502 (ISQP…SPLA). The span at 646-656 (SFSSPSSSHLP) shows a compositional bias: low complexity. Composition is skewed to polar residues over residues 841 to 852 (VSPGMFSSTEPT) and 869 to 878 (HPQSENTLSN). Low complexity-rich tracts occupy residues 879 to 888 (QQQQQQQQQQ) and 960 to 980 (AVSG…PGTT). 2 stretches are compositionally biased toward polar residues: residues 981–996 (MFQT…TGTQ) and 1224–1247 (PQSQ…NSPS). The segment covering 1248–1266 (QEQQQQQQQQQQQQQQQQQ) has biased composition (low complexity). Composition is skewed to polar residues over residues 1267–1278 (SILFSNQNTMAT) and 1291–1304 (FNPN…QEQQ). Low complexity predominate over residues 1320 to 1330 (QEQQPMQFQSQ). Residues 1331–1371 (STVSSLQNPGPTQSESSQTPLFHSSPQIQLVQGSPSSQEQQ) are compositionally biased toward polar residues. The span at 1475–1486 (QPGQPQNEGQPP) shows a compositional bias: low complexity. The span at 1487-1502 (VTTLLSQQMPENSPLA) shows a compositional bias: polar residues.

In terms of assembly, homodimer when bound to DNA, completely encircles its DNA target. Interacts with CIDEC; this interaction is direct and retains NFAT5 in the cytoplasm. Does not bind with Fos and Jun transcription factors. Interacts with DDX5 and DDX17; this interaction leads to DDX5/DDX17 recruitment to LNC2 and S100A4 promoters and NFAT5-mediated DDX5/DDX17-enhanced transactivation. Post-translationally, phosphorylated. Phosphorylated at Thr-135 by CDK5 in response to osmotic stress; this phosphorylation mediates its rapid nuclear localization. In terms of processing, poly-ADP-ribosylated by PARP1 in response to DNA damage, promoting recruitment to sites of R-loop-associated DNA damage. Widely expressed, with highest levels in skeletal muscle, brain, heart and peripheral blood leukocytes.

Its subcellular location is the nucleus. It is found in the cytoplasm. The protein resides in the chromosome. Functionally, transcription factor involved, among others, in the transcriptional regulation of osmoprotective and inflammatory genes. Binds the DNA consensus sequence 5'-[ACT][AG]TGGAAA[CAT]A[TA][ATC][CA][ATG][GT][GAC][CG][CT]-3'. Mediates the transcriptional response to hypertonicity. Positively regulates the transcription of LCN2 and S100A4 genes; optimal transactivation of these genes requires the presence of DDX5/DDX17. Also involved in the DNA damage response by preventing formation of R-loops; R-loops are composed of a DNA:RNA hybrid and the associated non-template single-stranded DNA. The protein is Nuclear factor of activated T-cells 5 of Homo sapiens (Human).